The primary structure comprises 193 residues: Acyl carrier protein phosphodiesterase (193 aa).

This sequence belongs to the AcpH family.

The catalysed reaction is holo-[ACP] + H2O = apo-[ACP] + (R)-4'-phosphopantetheine + H(+). In terms of biological role, converts holo-ACP to apo-ACP by hydrolytic cleavage of the phosphopantetheine prosthetic group from ACP. The sequence is that of Acyl carrier protein phosphodiesterase from Serratia proteamaculans (strain 568).